The following is a 237-amino-acid chain: NAD-dependent protein deacetylase (237 aa).

Residues methionine 1–alanine 237 enclose the Deacetylase sirtuin-type domain. Residues alanine 18, threonine 22, phenylalanine 29, arginine 30, glutamine 95, aspartate 98, and histidine 113 each contribute to the NAD(+) site. Phenylalanine 29 is a binding site for nicotinamide. Aspartate 98 lines the nicotinamide pocket. Histidine 113 (proton acceptor) is an active-site residue. 4 residues coordinate Zn(2+): cysteine 121, cysteine 124, cysteine 140, and cysteine 142. Residues serine 180, serine 181, asparagine 205, and isoleucine 224 each coordinate NAD(+).

It belongs to the sirtuin family. Class U subfamily. The cofactor is Zn(2+).

It localises to the cytoplasm. It carries out the reaction N(6)-acetyl-L-lysyl-[protein] + NAD(+) + H2O = 2''-O-acetyl-ADP-D-ribose + nicotinamide + L-lysyl-[protein]. In terms of biological role, NAD-dependent protein deacetylase which modulates the activities of several enzymes which are inactive in their acetylated form. The sequence is that of NAD-dependent protein deacetylase from Halalkalibacterium halodurans (strain ATCC BAA-125 / DSM 18197 / FERM 7344 / JCM 9153 / C-125) (Bacillus halodurans).